Here is a 211-residue protein sequence, read N- to C-terminus: Wound-induced protein WIN2 (211 aa).

Residues 1-25 (MVKLSCGPILLALVLCISLTSVANA) form the signal peptide. The Chitin-binding type-1 domain maps to 26 to 68 (QQCGRQRGGALCGNNLCCSQFGWCGSTPEYCSPSQGCQSQCTG). Intrachain disulfides connect Cys-28–Cys-43, Cys-37–Cys-49, Cys-42–Cys-56, and Cys-62–Cys-66. The 122-residue stretch at 77–198 (GSAQNVRATY…VNYQFVNCGD (122 aa)) folds into the Barwin domain.

The protein is Wound-induced protein WIN2 (WIN2) of Solanum tuberosum (Potato).